The chain runs to 232 residues: Large ribosomal subunit protein uL1 (232 aa).

The protein belongs to the universal ribosomal protein uL1 family. Part of the 50S ribosomal subunit.

Binds directly to 23S rRNA. The L1 stalk is quite mobile in the ribosome, and is involved in E site tRNA release. Functionally, protein L1 is also a translational repressor protein, it controls the translation of the L11 operon by binding to its mRNA. This Coxiella burnetii (strain RSA 331 / Henzerling II) protein is Large ribosomal subunit protein uL1.